The primary structure comprises 1068 residues: DNA-directed RNA polymerase subunit beta (1068 aa).

This sequence belongs to the RNA polymerase beta chain family. In terms of assembly, in plastids the minimal PEP RNA polymerase catalytic core is composed of four subunits: alpha, beta, beta', and beta''. When a (nuclear-encoded) sigma factor is associated with the core the holoenzyme is formed, which can initiate transcription.

Its subcellular location is the plastid. It is found in the chloroplast. The enzyme catalyses RNA(n) + a ribonucleoside 5'-triphosphate = RNA(n+1) + diphosphate. Its function is as follows. DNA-dependent RNA polymerase catalyzes the transcription of DNA into RNA using the four ribonucleoside triphosphates as substrates. This chain is DNA-directed RNA polymerase subunit beta, found in Staurastrum punctulatum (Green alga).